The sequence spans 355 residues: C-C chemokine receptor type 1 (355 aa).

Over 1 to 34 (MEISDFTEAYPTTTEFDYGDSTPCQKTAVRAFGA) the chain is Extracellular. Residues 35 to 60 (GLLPPLYSLVFIIGVVGNVLVILVLM) traverse the membrane as a helical segment. Residues 61 to 64 (QHRR) are Cytoplasmic-facing. A helical membrane pass occupies residues 65 to 91 (LQSMTSIYLFNLAVSDLVFLFTLPFWI). Residues 92–107 (DYKLKDDWIFGDAMCK) are Extracellular-facing. Cysteines 106 and 183 form a disulfide. The helical transmembrane segment at 108 to 129 (LLSGFYYLGLYSEIFFIILLTI) threads the bilayer. Residues 130–146 (DRYLAIVHAVFALRART) are Cytoplasmic-facing. The helical transmembrane segment at 147-171 (VTFGIITSIITWALAILASMPALYF) threads the bilayer. Topologically, residues 172 to 197 (FKAQWEFTHRTCSPHFPYKSLKQWKR) are extracellular. A helical membrane pass occupies residues 198–223 (FQALKLNLLGLILPLLVMIICYAGII). Topologically, residues 224-239 (RILLRRPSEKKVKAVR) are cytoplasmic. Residues 240 to 264 (LIFAITLLFFLLWTPYNLSVFVSAF) traverse the membrane as a helical segment. Residues 265–281 (QDVLFTNQCEQSKQLDL) lie on the Extracellular side of the membrane. Residues 282–305 (AMQVTEVIAYTHCCVNPIIYVFVG) form a helical membrane-spanning segment. Topologically, residues 306–355 (ERFWKYLRQLFQRHVAIPLAKWLPFLSVDQLERTSSISPSTGEHELSAGF) are cytoplasmic.

The protein belongs to the G-protein coupled receptor 1 family. As to quaternary structure, interacts with CREB3. Interacts with CCL3. Interacts with CCL15. Interacts with CCL23. Interacts with GNAI1. Interacts with PF4/CXCL4. In terms of tissue distribution, detected in the heart, spleen, lung, peritoneal exudate cells and leukocytes.

The protein localises to the cell membrane. Functionally, chemokine receptor that plays a crucial role in regulating immune cell migration, inflammation, and immune responses. Contributes to the inflammatory response by recruiting immune cells, such as monocytes, macrophages, T-cells, and dendritic cells, to sites of inflammation for the clearance of pathogens and the resolution of tissue damage. When activated by its ligands including CCL3, CCL5-9, CCL13-16 and CCL23, triggers a signaling cascade within immune cells, leading to their migration towards the source of the chemokine. For example, mediates neutrophil migration after activation by CCL3 leading to the sequential release of TNF-alpha and leukotriene B4. Also mediates monocyte migration upon CXCL4 binding. Activation by CCL5 results in neuroinflammation through the ERK1/2 signaling pathway. This chain is C-C chemokine receptor type 1 (Ccr1), found in Mus musculus (Mouse).